The primary structure comprises 367 residues: Phthiodiolone/phenolphthiodiolone dimycocerosates ketoreductase (367 aa).

The protein belongs to the mer family. Phthiodiolone/phenolphthiodiolone dimycocerosates ketoreductase subfamily.

In terms of biological role, catalyzes the reduction of the keto moiety of phthiodiolone dimycocerosates (DIM B) and glycosylated phenolphthiodiolone dimycocerosates to form the intermediate compounds phthiotriol and glycosylated phenolphthiotriol dimycocerosates during phthiocerol dimycocerosates (DIM A) and glycosylated phenolphthiocerol dimycocerosates (PGL) biosynthesis. The protein is Phthiodiolone/phenolphthiodiolone dimycocerosates ketoreductase of Mycobacterium kansasii.